The following is a 64-amino-acid chain: MDARLLEIIVCPICKGPLHYDRAAQELICNADKLAYPIRDGIPVMLVDEARQTVEGTPVDPAGR.

This sequence belongs to the UPF0434 family.

This chain is UPF0434 protein Bcen_1934, found in Burkholderia orbicola (strain AU 1054).